A 711-amino-acid chain; its full sequence is Progesterone receptor (711 aa).

The segment at 1-347 is modulating, Pro-Rich; sequence MEDKSKQCLQ…YGFDALPRKI (347 aa). NR C4-type zinc fingers lie at residues 348-368 and 384-408; these read CLICSDEASGCHYGALTCGSC and CAGRNDCIGDKIRRKNCPSCRLKKC. The nuclear receptor DNA-binding region spans 348 to 420; sequence CLICSDEASG…AGMVLGGRKF (73 aa). The region spanning 457 to 691 is the NR LBD domain; that stretch reads QEVQYFPELL…EFPEMMTEVI (235 aa).

The protein belongs to the nuclear hormone receptor family. NR3 subfamily. As to expression, expressed in all tissues examined: highly expressed in testis and brain. Also expressed in heart, lung, liver, kidney, stomach and small intestine.

The protein resides in the nucleus. Its function is as follows. The steroid hormones and their receptors are involved in the regulation of eukaryotic gene expression and affect cellular proliferation and differentiation in target tissues. In Rana dybowskii (Dybovsky's frog), this protein is Progesterone receptor (pgr).